A 211-amino-acid chain; its full sequence is 2,3-bisphosphoglycerate-dependent phosphoglycerate mutase (211 aa).

Residues 9–16, 22–23, Arg-61, 88–91, Lys-99, 115–116, and 159–160 each bind substrate; these read RHGQSDWN, TG, ERDY, RR, and GN. His-10 serves as the catalytic Tele-phosphohistidine intermediate. The active-site Proton donor/acceptor is Glu-88.

Belongs to the phosphoglycerate mutase family. BPG-dependent PGAM subfamily. As to quaternary structure, homodimer.

It catalyses the reaction (2R)-2-phosphoglycerate = (2R)-3-phosphoglycerate. It participates in carbohydrate degradation; glycolysis; pyruvate from D-glyceraldehyde 3-phosphate: step 3/5. Functionally, catalyzes the interconversion of 2-phosphoglycerate and 3-phosphoglycerate. The polypeptide is 2,3-bisphosphoglycerate-dependent phosphoglycerate mutase (Rhizobium rhizogenes (strain K84 / ATCC BAA-868) (Agrobacterium radiobacter)).